We begin with the raw amino-acid sequence, 483 residues long: GTPase Obg (483 aa).

Positions 2–159 (SRFIDRVVLH…RDLVLELKSV (158 aa)) constitute an Obg domain. One can recognise an OBG-type G domain in the interval 160 to 340 (ADVGLLGFPS…LTFALAKMVR (181 aa)). Residues 166 to 173 (GFPSAGKS), 191 to 195 (FTTLV), 212 to 215 (DVPG), 292 to 295 (NKTD), and 321 to 323 (SAV) contribute to the GTP site. Ser-173 and Thr-193 together coordinate Mg(2+). The OCT domain occupies 358-438 (PVKVKDSSFT…IGDVSFEWEP (81 aa)).

It belongs to the TRAFAC class OBG-HflX-like GTPase superfamily. OBG GTPase family. As to quaternary structure, monomer. Requires Mg(2+) as cofactor.

It localises to the cytoplasm. Functionally, an essential GTPase which binds GTP, GDP and possibly (p)ppGpp with moderate affinity, with high nucleotide exchange rates and a fairly low GTP hydrolysis rate. Plays a role in control of the cell cycle, stress response, ribosome biogenesis and in those bacteria that undergo differentiation, in morphogenesis control. The polypeptide is GTPase Obg (Rhodococcus erythropolis (strain PR4 / NBRC 100887)).